Consider the following 716-residue polypeptide: MSDSGASRLRRQLESGGFEARLYVKQLSQQSDGDRDLQEHRQRVQALAEETAQNLKRNVYQNYRQFIETAREISYLESEMYQLSHLLTEQKSSLESIPLALLPAAAAGASTGEDTAGAGPRERGAAQAGFLPGPAGVPREGPGTGEEGKQRTLTTLLEKVEGCRDLLETPGQYLVYNGDLVEYEADHMAQLQRVHGFLMNDCLLVATWLPQRRGMYRYNALYPLDRLAVVNVKDNPPMKDMFKLLMFPESRIFQAENAKIKREWLEVLEETKRALSDKRRREQEEAAALRAPPPVTSKGSNPFEDEAEEELATPEAEEEKVDLSMEWIQELPEDLDVCIAQRDFEGAVDLLDKLNHYLEDKPSPPSVKELRAKVDERVRQLTEVLVFELSPDRSLRGGPKATRRAVSQLIRLGQCTKACELFLRNRAAAVHTAIRQLRIEGATLLYIHKLCHVFFTSLLETAREFETDFAGTDSGCYSAFVVWARSAMGMFVDAFSKQVFDSKESLSTAAECVKVAKEHCQQLGEIGLDLTFIIHALLVKDIQGALLSYKEIIIEATKHRNSEEMWRRMNLMTPEALGKLKEEMRSCGVSNFEQYTGDDCWVNLSYTVVAFTKQTMGFLEEALKLYFPELHMVLLESLVEVILVAVQHVDYSLRCEQDPEKKTFIRQNASFLYDTVLPVVERRFEEGVGKPAKQLQDLRNASRLLRVNPESTTSVV.

A Phosphoserine modification is found at serine 15. Residues 110–119 are compositionally biased toward low complexity; it reads STGEDTAGAG. The tract at residues 110–149 is disordered; sequence STGEDTAGAGPRERGAAQAGFLPGPAGVPREGPGTGEEGK. A PH domain is found at 173–273; sequence YLVYNGDLVE…WLEVLEETKR (101 aa). Positions 275-284 are enriched in basic and acidic residues; it reads LSDKRRREQE. The segment at 275-319 is disordered; the sequence is LSDKRRREQEEAAALRAPPPVTSKGSNPFEDEAEEELATPEAEEE. The segment covering 303–319 has biased composition (acidic residues); the sequence is FEDEAEEELATPEAEEE. The residue at position 313 (threonine 313) is a Phosphothreonine.

It belongs to the EXO84 family. As to quaternary structure, the exocyst complex is composed of EXOC1, EXOC2, EXOC3, EXOC4, EXOC5, EXOC6, EXOC7 and EXOC8. Interacts (via PH domain) with GTP-bound RALA and RALB. Interacts with SH3BP1; required for the localization of both SH3BP1 and the exocyst to the leading edge of migrating cells.

It localises to the cytoplasm. The protein localises to the perinuclear region. The protein resides in the cell projection. Its subcellular location is the growth cone. Functionally, component of the exocyst complex involved in the docking of exocytic vesicles with fusion sites on the plasma membrane. This is Exocyst complex component 8 (Exoc8) from Rattus norvegicus (Rat).